The following is a 141-amino-acid chain: Hemoglobin subunit alpha-1/2 (141 aa).

The region spanning valine 1–arginine 141 is the Globin domain. A Phosphoserine modification is found at serine 3. At lysine 7 the chain carries N6-succinyllysine. At threonine 8 the chain carries Phosphothreonine. The residue at position 11 (lysine 11) is an N6-succinyllysine. Lysine 16 carries the post-translational modification N6-acetyllysine; alternate. At lysine 16 the chain carries N6-succinyllysine; alternate. The residue at position 24 (tyrosine 24) is a Phosphotyrosine. Serine 35 is subject to Phosphoserine. Lysine 40 bears the N6-succinyllysine mark. Position 49 is a phosphoserine (serine 49). O2 is bound at residue histidine 58. Histidine 87 provides a ligand contact to heme b. Serine 102 is modified (phosphoserine). At threonine 108 the chain carries Phosphothreonine. At serine 124 the chain carries Phosphoserine. Phosphothreonine occurs at positions 134 and 137. Serine 138 is subject to Phosphoserine.

Belongs to the globin family. Heterotetramer of two alpha chains and two beta chains. Red blood cells.

Its function is as follows. Involved in oxygen transport from the lung to the various peripheral tissues. In Mustela putorius (European polecat), this protein is Hemoglobin subunit alpha-1/2.